The following is a 148-amino-acid chain: Putative nickel-responsive regulator (148 aa).

Residues His88, His99, His101, and Cys107 each coordinate Ni(2+).

It belongs to the transcriptional regulatory CopG/NikR family. Homotetramer. The cofactor is Ni(2+).

In terms of biological role, transcriptional regulator. The polypeptide is Putative nickel-responsive regulator (Helicobacter pylori (strain ATCC 700392 / 26695) (Campylobacter pylori)).